A 401-amino-acid chain; its full sequence is Probable cysteine desulfurase (401 aa).

Position 223 is an N6-(pyridoxal phosphate)lysine (lysine 223).

This sequence belongs to the class-V pyridoxal-phosphate-dependent aminotransferase family. Csd subfamily. It depends on pyridoxal 5'-phosphate as a cofactor.

The catalysed reaction is (sulfur carrier)-H + L-cysteine = (sulfur carrier)-SH + L-alanine. Functionally, catalyzes the removal of elemental sulfur and selenium atoms from L-cysteine, L-cystine, L-selenocysteine, and L-selenocystine to produce L-alanine. The protein is Probable cysteine desulfurase (csdA) of Pseudomonas putida (strain ATCC 47054 / DSM 6125 / CFBP 8728 / NCIMB 11950 / KT2440).